The following is a 351-amino-acid chain: V-type proton ATPase subunit d2 (351 aa).

The protein belongs to the V-ATPase V0D/AC39 subunit family. As to quaternary structure, V-ATPase is a heteromultimeric enzyme composed of a peripheral catalytic V1 complex (components A to H) attached to an integral membrane V0 proton pore complex (components: a, c, c'', d and e).

The protein localises to the vacuole membrane. Functionally, subunit of the integral membrane V0 complex of vacuolar ATPase. Vacuolar ATPase is responsible for acidifying a variety of intracellular compartments in eukaryotic cells, thus providing most of the energy required for transport processes in the vacuolar system. The protein is V-type proton ATPase subunit d2 (VHA-d2) of Arabidopsis thaliana (Mouse-ear cress).